The chain runs to 332 residues: Ribosomal RNA small subunit methyltransferase C (332 aa).

It belongs to the methyltransferase superfamily. RsmC family. Monomer.

It localises to the cytoplasm. The catalysed reaction is guanosine(1207) in 16S rRNA + S-adenosyl-L-methionine = N(2)-methylguanosine(1207) in 16S rRNA + S-adenosyl-L-homocysteine + H(+). Its function is as follows. Specifically methylates the guanine in position 1207 of 16S rRNA in the 30S particle. This is Ribosomal RNA small subunit methyltransferase C from Pseudomonas putida (strain GB-1).